We begin with the raw amino-acid sequence, 90 residues long: Probable Fe(2+)-trafficking protein (90 aa).

Belongs to the Fe(2+)-trafficking protein family.

Its function is as follows. Could be a mediator in iron transactions between iron acquisition and iron-requiring processes, such as synthesis and/or repair of Fe-S clusters in biosynthetic enzymes. The polypeptide is Probable Fe(2+)-trafficking protein (Leptothrix cholodnii (strain ATCC 51168 / LMG 8142 / SP-6) (Leptothrix discophora (strain SP-6))).